Reading from the N-terminus, the 164-residue chain is Protein-export protein SecB (164 aa).

The protein belongs to the SecB family. In terms of assembly, homotetramer, a dimer of dimers. One homotetramer interacts with 1 SecA dimer.

The protein localises to the cytoplasm. In terms of biological role, one of the proteins required for the normal export of preproteins out of the cell cytoplasm. It is a molecular chaperone that binds to a subset of precursor proteins, maintaining them in a translocation-competent state. It also specifically binds to its receptor SecA. The protein is Protein-export protein SecB of Herminiimonas arsenicoxydans.